The following is a 424-amino-acid chain: Glutamate-1-semialdehyde 2,1-aminomutase (424 aa).

Residue K258 is modified to N6-(pyridoxal phosphate)lysine.

This sequence belongs to the class-III pyridoxal-phosphate-dependent aminotransferase family. HemL subfamily. Pyridoxal 5'-phosphate is required as a cofactor.

The protein localises to the cytoplasm. It catalyses the reaction (S)-4-amino-5-oxopentanoate = 5-aminolevulinate. Its pathway is porphyrin-containing compound metabolism; protoporphyrin-IX biosynthesis; 5-aminolevulinate from L-glutamyl-tRNA(Glu): step 2/2. In Pyrobaculum islandicum (strain DSM 4184 / JCM 9189 / GEO3), this protein is Glutamate-1-semialdehyde 2,1-aminomutase.